The sequence spans 863 residues: Eukaryotic translation initiation factor 3 subunit C (863 aa).

A disordered region spans residues 1-92 (MSRFFRGGDD…VKSAKDKRFD (92 aa)). Residues 16-53 (SSDEEELYSTSEEEEEEDQDQEESSEEEDEEESSDEDE) show a composition bias toward acidic residues. A compositionally biased stretch (basic and acidic residues) spans 79-92 (GATKVKSAKDKRFD). The 175-residue stretch at 604–778 (FHMHINLELL…KTVIFRKGVE (175 aa)) folds into the PCI domain. The interval 808–863 (TQGSANAFSRKDGRQGGQRGGGQRSGRGGARAGGNAQRQAGGTQFTGGALGAAVRG) is disordered. Positions 822 to 839 (QGGQRGGGQRSGRGGARA) are enriched in gly residues. A compositionally biased stretch (low complexity) spans 840–850 (GGNAQRQAGGT).

This sequence belongs to the eIF-3 subunit C family. In terms of assembly, component of the eukaryotic translation initiation factor 3 (eIF-3) complex.

The protein resides in the cytoplasm. In terms of biological role, component of the eukaryotic translation initiation factor 3 (eIF-3) complex, which is involved in protein synthesis of a specialized repertoire of mRNAs and, together with other initiation factors, stimulates binding of mRNA and methionyl-tRNAi to the 40S ribosome. The eIF-3 complex specifically targets and initiates translation of a subset of mRNAs involved in cell proliferation. This Chaetomium globosum (strain ATCC 6205 / CBS 148.51 / DSM 1962 / NBRC 6347 / NRRL 1970) (Soil fungus) protein is Eukaryotic translation initiation factor 3 subunit C.